A 238-amino-acid polypeptide reads, in one-letter code: Purine nucleoside phosphorylase DeoD-type (238 aa).

Residue H5 participates in a purine D-ribonucleoside binding. Residues G21, R25, R44, and R88–T91 each bind phosphate. A purine D-ribonucleoside contacts are provided by residues D180–E182 and S204–D205. Catalysis depends on D205, which acts as the Proton donor.

It belongs to the PNP/UDP phosphorylase family. Homohexamer; trimer of homodimers.

The catalysed reaction is a purine D-ribonucleoside + phosphate = a purine nucleobase + alpha-D-ribose 1-phosphate. It carries out the reaction a purine 2'-deoxy-D-ribonucleoside + phosphate = a purine nucleobase + 2-deoxy-alpha-D-ribose 1-phosphate. Functionally, catalyzes the reversible phosphorolytic breakdown of the N-glycosidic bond in the beta-(deoxy)ribonucleoside molecules, with the formation of the corresponding free purine bases and pentose-1-phosphate. This chain is Purine nucleoside phosphorylase DeoD-type, found in Buchnera aphidicola subsp. Baizongia pistaciae (strain Bp).